The following is a 1169-amino-acid chain: Transcription-repair-coupling factor (1169 aa).

The 162-residue stretch at 634–795 folds into the Helicase ATP-binding domain; sequence DMERARPMDR…MLGVRDLSVI (162 aa). 647–654 is a binding site for ATP; sequence GDVGYGKT. The short motif at 748-751 is the DEEQ box element; it reads DEEQ. Residues 809–970 enclose the Helicase C-terminal domain; sequence VLEQNTNFIK…GFKIAMRDLN (162 aa).

In the N-terminal section; belongs to the UvrB family. The protein in the C-terminal section; belongs to the helicase family. RecG subfamily.

It is found in the cytoplasm. Couples transcription and DNA repair by recognizing RNA polymerase (RNAP) stalled at DNA lesions. Mediates ATP-dependent release of RNAP and its truncated transcript from the DNA, and recruitment of nucleotide excision repair machinery to the damaged site. The protein is Transcription-repair-coupling factor of Staphylococcus epidermidis (strain ATCC 12228 / FDA PCI 1200).